A 177-amino-acid chain; its full sequence is Large ribosomal subunit protein uL6 (177 aa).

Belongs to the universal ribosomal protein uL6 family. In terms of assembly, part of the 50S ribosomal subunit.

In terms of biological role, this protein binds to the 23S rRNA, and is important in its secondary structure. It is located near the subunit interface in the base of the L7/L12 stalk, and near the tRNA binding site of the peptidyltransferase center. The protein is Large ribosomal subunit protein uL6 of Novosphingobium aromaticivorans (strain ATCC 700278 / DSM 12444 / CCUG 56034 / CIP 105152 / NBRC 16084 / F199).